We begin with the raw amino-acid sequence, 370 residues long: Anthranilate phosphoribosyltransferase (370 aa).

5-phospho-alpha-D-ribose 1-diphosphate is bound by residues Gly-82, 85–86, Thr-90, 92–95, 110–118, and Ser-122; these read GD, NVST, and KHGNRAATS. Gly-82 is an anthranilate binding site. Ser-94 provides a ligand contact to Mg(2+). Asn-113 provides a ligand contact to anthranilate. Arg-168 is an anthranilate binding site. Asp-226 and Glu-227 together coordinate Mg(2+).

It belongs to the anthranilate phosphoribosyltransferase family. As to quaternary structure, homodimer. It depends on Mg(2+) as a cofactor.

The enzyme catalyses N-(5-phospho-beta-D-ribosyl)anthranilate + diphosphate = 5-phospho-alpha-D-ribose 1-diphosphate + anthranilate. It participates in amino-acid biosynthesis; L-tryptophan biosynthesis; L-tryptophan from chorismate: step 2/5. Functionally, catalyzes the transfer of the phosphoribosyl group of 5-phosphorylribose-1-pyrophosphate (PRPP) to anthranilate to yield N-(5'-phosphoribosyl)-anthranilate (PRA). The sequence is that of Anthranilate phosphoribosyltransferase from Methanosarcina mazei (strain ATCC BAA-159 / DSM 3647 / Goe1 / Go1 / JCM 11833 / OCM 88) (Methanosarcina frisia).